The following is a 244-amino-acid chain: Triosephosphate isomerase (244 aa).

8-10 is a binding site for substrate; that stretch reads NWK. His-93 serves as the catalytic Electrophile. The active-site Proton acceptor is Glu-161. Residues Gly-167, Ser-206, and 227 to 228 each bind substrate; that span reads GG.

It belongs to the triosephosphate isomerase family. As to quaternary structure, homodimer.

The protein localises to the cytoplasm. The catalysed reaction is D-glyceraldehyde 3-phosphate = dihydroxyacetone phosphate. Its pathway is carbohydrate biosynthesis; gluconeogenesis. The protein operates within carbohydrate degradation; glycolysis; D-glyceraldehyde 3-phosphate from glycerone phosphate: step 1/1. Functionally, involved in the gluconeogenesis. Catalyzes stereospecifically the conversion of dihydroxyacetone phosphate (DHAP) to D-glyceraldehyde-3-phosphate (G3P). The sequence is that of Triosephosphate isomerase from Deinococcus radiodurans (strain ATCC 13939 / DSM 20539 / JCM 16871 / CCUG 27074 / LMG 4051 / NBRC 15346 / NCIMB 9279 / VKM B-1422 / R1).